The chain runs to 226 residues: MTARIGVVTFPGSLDDRDTQRAIRVAGAEPVALWHKDKDLKQVDAVVLCGGFSYGDYLRAGAIARFSPVMDTVIDQAKAGLPVLGICNGFQILTEAHLLPGGMLGNDHLHFICRDQKLRVENADTSWTSDYTAGQEIHIPLKNMDGRYVADRRTLDELEAEGRVAFRYLDMNPNGSLNDIAGITNAAGNVVGLMPHPEHAVESLIGTGRTDGLPFFTSILKKLVNA.

One can recognise a Glutamine amidotransferase type-1 domain in the interval 4–226 (RIGVVTFPGS…TSILKKLVNA (223 aa)). Catalysis depends on cysteine 87, which acts as the Nucleophile. Residues histidine 196 and glutamate 198 contribute to the active site.

Part of the FGAM synthase complex composed of 1 PurL, 1 PurQ and 2 PurS subunits.

It localises to the cytoplasm. It catalyses the reaction N(2)-formyl-N(1)-(5-phospho-beta-D-ribosyl)glycinamide + L-glutamine + ATP + H2O = 2-formamido-N(1)-(5-O-phospho-beta-D-ribosyl)acetamidine + L-glutamate + ADP + phosphate + H(+). The enzyme catalyses L-glutamine + H2O = L-glutamate + NH4(+). Its pathway is purine metabolism; IMP biosynthesis via de novo pathway; 5-amino-1-(5-phospho-D-ribosyl)imidazole from N(2)-formyl-N(1)-(5-phospho-D-ribosyl)glycinamide: step 1/2. Part of the phosphoribosylformylglycinamidine synthase complex involved in the purines biosynthetic pathway. Catalyzes the ATP-dependent conversion of formylglycinamide ribonucleotide (FGAR) and glutamine to yield formylglycinamidine ribonucleotide (FGAM) and glutamate. The FGAM synthase complex is composed of three subunits. PurQ produces an ammonia molecule by converting glutamine to glutamate. PurL transfers the ammonia molecule to FGAR to form FGAM in an ATP-dependent manner. PurS interacts with PurQ and PurL and is thought to assist in the transfer of the ammonia molecule from PurQ to PurL. The protein is Phosphoribosylformylglycinamidine synthase subunit PurQ of Streptomyces coelicolor (strain ATCC BAA-471 / A3(2) / M145).